The sequence spans 92 residues: Small ribosomal subunit protein uS19 (92 aa).

This sequence belongs to the universal ribosomal protein uS19 family.

In terms of biological role, protein S19 forms a complex with S13 that binds strongly to the 16S ribosomal RNA. This Francisella philomiragia subsp. philomiragia (strain ATCC 25017 / CCUG 19701 / FSC 153 / O#319-036) protein is Small ribosomal subunit protein uS19.